The sequence spans 100 residues: NADH-quinone oxidoreductase subunit K (100 aa).

The next 3 helical transmembrane spans lie at 4 to 24 (LFHG…SLIV), 28 to 48 (ILFI…ALIV), and 60 to 80 (IMYI…LALL).

This sequence belongs to the complex I subunit 4L family. NDH-1 is composed of 13 different subunits. Subunits NuoA, H, J, K, L, M, N constitute the membrane sector of the complex.

The protein localises to the cell membrane. It carries out the reaction a quinone + NADH + 5 H(+)(in) = a quinol + NAD(+) + 4 H(+)(out). Functionally, NDH-1 shuttles electrons from NADH, via FMN and iron-sulfur (Fe-S) centers, to quinones in the respiratory chain. The immediate electron acceptor for the enzyme in this species is believed to be ubiquinone. Couples the redox reaction to proton translocation (for every two electrons transferred, four hydrogen ions are translocated across the cytoplasmic membrane), and thus conserves the redox energy in a proton gradient. In Buchnera aphidicola subsp. Acyrthosiphon pisum (strain 5A), this protein is NADH-quinone oxidoreductase subunit K.